Reading from the N-terminus, the 137-residue chain is Large ribosomal subunit protein uL16 (137 aa).

The protein belongs to the universal ribosomal protein uL16 family. As to quaternary structure, part of the 50S ribosomal subunit.

Binds 23S rRNA and is also seen to make contacts with the A and possibly P site tRNAs. The protein is Large ribosomal subunit protein uL16 of Magnetococcus marinus (strain ATCC BAA-1437 / JCM 17883 / MC-1).